A 435-amino-acid polypeptide reads, in one-letter code: Putative BTB/POZ domain-containing protein L275 (435 aa).

Residues 80-149 enclose the BTB domain; sequence YDGYVYINVG…IKGKQNDNHN (70 aa).

The protein belongs to the mimivirus BTB/WD family.

The protein is Putative BTB/POZ domain-containing protein L275 of Acanthamoeba polyphaga mimivirus (APMV).